The sequence spans 610 residues: UvrABC system protein C (610 aa).

A GIY-YIG domain is found at 16–94 (SQPGVYRMYD…IKLYQPRYNV (79 aa)). Residues 204-239 (DQVLTQLIARMEKASQDLAFEEAARIRDQIQAVRRV) enclose the UVR domain.

Belongs to the UvrC family. In terms of assembly, interacts with UvrB in an incision complex.

Its subcellular location is the cytoplasm. The UvrABC repair system catalyzes the recognition and processing of DNA lesions. UvrC both incises the 5' and 3' sides of the lesion. The N-terminal half is responsible for the 3' incision and the C-terminal half is responsible for the 5' incision. The protein is UvrABC system protein C of Salmonella paratyphi B (strain ATCC BAA-1250 / SPB7).